A 407-amino-acid chain; its full sequence is Dephospho-CoA kinase (407 aa).

One can recognise a DPCK domain in the interval 3–201; the sequence is RIGLTGGIGA…ERIVPFAHNL (199 aa). Position 11–16 (11–16) interacts with ATP; sequence GAGKSA. The tract at residues 196–407 is UPF0157; that stretch reads PFAHNLSTRQ…DWADSTGWKP (212 aa).

In the N-terminal section; belongs to the CoaE family. This sequence in the C-terminal section; belongs to the UPF0157 (GrpB) family.

The protein localises to the cytoplasm. It catalyses the reaction 3'-dephospho-CoA + ATP = ADP + CoA + H(+). It participates in cofactor biosynthesis; coenzyme A biosynthesis; CoA from (R)-pantothenate: step 5/5. Functionally, catalyzes the phosphorylation of the 3'-hydroxyl group of dephosphocoenzyme A to form coenzyme A. The protein is Dephospho-CoA kinase of Mycolicibacterium paratuberculosis (strain ATCC BAA-968 / K-10) (Mycobacterium paratuberculosis).